The following is a 164-amino-acid chain: Interleukin-10 (164 aa).

Positions 1-18 are cleaved as a signal peptide; sequence MPSSALLCCLIFLARVAA. Cystine bridges form between C30-C126 and C80-C132. An N-linked (GlcNAc...) asparagine glycan is attached at N134.

It belongs to the IL-10 family. As to quaternary structure, homodimer. Interacts with IL10RA and IL10RB.

It is found in the secreted. Functionally, major immune regulatory cytokine that acts on many cells of the immune system where it has profound anti-inflammatory functions, limiting excessive tissue disruption caused by inflammation. Mechanistically, IL10 binds to its heterotetrameric receptor comprising IL10RA and IL10RB leading to JAK1 and STAT2-mediated phosphorylation of STAT3. In turn, STAT3 translocates to the nucleus where it drives expression of anti-inflammatory mediators. Targets antigen-presenting cells (APCs) such as macrophages and monocytes and inhibits their release of pro-inflammatory cytokines including granulocyte-macrophage colony-stimulating factor /GM-CSF, granulocyte colony-stimulating factor/G-CSF, IL-1 alpha, IL-1 beta, IL-6, IL-8 and TNF-alpha. Also interferes with antigen presentation by reducing the expression of MHC-class II and co-stimulatory molecules, thereby inhibiting their ability to induce T cell activation. In addition, controls the inflammatory response of macrophages by reprogramming essential metabolic pathways including mTOR signaling. In Orcinus orca (Killer whale), this protein is Interleukin-10 (IL10).